We begin with the raw amino-acid sequence, 326 residues long: Flap endonuclease 1 (326 aa).

The tract at residues 1–100 is N-domain; the sequence is MGNADLRSLA…DEVEKRREQR (100 aa). Mg(2+) contacts are provided by Asp28, Asp82, Glu154, Glu156, Asp175, Asp177, and Asp225. The tract at residues 118-246 is I-domain; sequence RVAKLDSRTQ…TAVKDLHEHG (129 aa). The interval 318–326 is interaction with PCNA; that stretch reads VQTGLDRWA.

Belongs to the XPG/RAD2 endonuclease family. FEN1 subfamily. In terms of assembly, interacts with PCNA. PCNA stimulates the nuclease activity without altering cleavage specificity. Mg(2+) is required as a cofactor.

Structure-specific nuclease with 5'-flap endonuclease and 5'-3' exonuclease activities involved in DNA replication and repair. During DNA replication, cleaves the 5'-overhanging flap structure that is generated by displacement synthesis when DNA polymerase encounters the 5'-end of a downstream Okazaki fragment. Binds the unpaired 3'-DNA end and kinks the DNA to facilitate 5' cleavage specificity. Cleaves one nucleotide into the double-stranded DNA from the junction in flap DNA, leaving a nick for ligation. Also involved in the base excision repair (BER) pathway. Acts as a genome stabilization factor that prevents flaps from equilibrating into structures that lead to duplications and deletions. Also possesses 5'-3' exonuclease activity on nicked or gapped double-stranded DNA. The protein is Flap endonuclease 1 of Haloarcula marismortui (strain ATCC 43049 / DSM 3752 / JCM 8966 / VKM B-1809) (Halobacterium marismortui).